Reading from the N-terminus, the 327-residue chain is Serine/threonine-protein phosphatase PP1-1 (327 aa).

Mn(2+) is bound by residues D63, H65, D91, and N123. The active-site Proton donor is H124. Residues H172 and H247 each coordinate Mn(2+). The disordered stretch occupies residues 305 to 327; that stretch reads GYQGSSQNWHMTPPRKNKTGNSK. T316 carries the post-translational modification Phosphothreonine; by CDC2. Basic residues predominate over residues 317–327; sequence PPRKNKTGNSK.

This sequence belongs to the PPP phosphatase family. PP-1 subfamily. As to quaternary structure, oligomer. Mn(2+) is required as a cofactor.

It is found in the nucleus. It carries out the reaction O-phospho-L-seryl-[protein] + H2O = L-seryl-[protein] + phosphate. It catalyses the reaction O-phospho-L-threonyl-[protein] + H2O = L-threonyl-[protein] + phosphate. Its function is as follows. Essential role in cell cycle control. PP1 is perhaps required for exit from mitosis. This is Serine/threonine-protein phosphatase PP1-1 (dis2) from Schizosaccharomyces pombe (strain 972 / ATCC 24843) (Fission yeast).